The sequence spans 207 residues: Probable isochorismatase (207 aa).

The protein belongs to the isochorismatase family.

It catalyses the reaction isochorismate + H2O = (2S,3S)-2,3-dihydroxy-2,3-dihydrobenzoate + pyruvate. Its pathway is antibiotic biosynthesis; phenazine biosynthesis. Functionally, involved in the biosynthesis of the antibiotic phenazine, a nitrogen-containing heterocyclic molecule having important roles in virulence, competition and biological control. This isochorismatase may remove pyruvate from chorismate during the formation of the phenazine ring structure and/or stabilize the phenazine biosynthetic complex. The sequence is that of Probable isochorismatase (phzA) from Pseudomonas chlororaphis (Pseudomonas aureofaciens).